Reading from the N-terminus, the 269-residue chain is Shikimate dehydrogenase (NADP(+)) (269 aa).

Shikimate is bound by residues 17–19 and threonine 64; that span reads SKS. Lysine 68 functions as the Proton acceptor in the catalytic mechanism. Position 80 (glutamate 80) interacts with NADP(+). Shikimate is bound by residues asparagine 89 and aspartate 105. NADP(+)-binding positions include 130-134, 154-159, and methionine 213; these read GAGGA and NRTHAK. Shikimate is bound at residue tyrosine 215. Glycine 237 serves as a coordination point for NADP(+).

The protein belongs to the shikimate dehydrogenase family. Homodimer.

The enzyme catalyses shikimate + NADP(+) = 3-dehydroshikimate + NADPH + H(+). Its pathway is metabolic intermediate biosynthesis; chorismate biosynthesis; chorismate from D-erythrose 4-phosphate and phosphoenolpyruvate: step 4/7. Its function is as follows. Involved in the biosynthesis of the chorismate, which leads to the biosynthesis of aromatic amino acids. Catalyzes the reversible NADPH linked reduction of 3-dehydroshikimate (DHSA) to yield shikimate (SA). The chain is Shikimate dehydrogenase (NADP(+)) from Neisseria flavescens.